A 317-amino-acid chain; its full sequence is Glycine--tRNA ligase alpha subunit (317 aa).

It belongs to the class-II aminoacyl-tRNA synthetase family. Tetramer of two alpha and two beta subunits.

It is found in the cytoplasm. The catalysed reaction is tRNA(Gly) + glycine + ATP = glycyl-tRNA(Gly) + AMP + diphosphate. This chain is Glycine--tRNA ligase alpha subunit, found in Lactococcus lactis subsp. cremoris (strain SK11).